The chain runs to 165 residues: uncharacterized protein (165 aa).

A helical transmembrane segment spans residues 16–36 (ASISSILNFFFFYIMEYFVAV).

The protein belongs to the asfivirus F165R family.

The protein localises to the host membrane. This is an uncharacterized protein from African swine fever virus (isolate Tick/Malawi/Lil 20-1/1983) (ASFV).